The sequence spans 139 residues: Large ribosomal subunit protein uL16 (139 aa).

Residues 1-19 show a composition bias toward basic residues; that stretch reads MLIPRRVKHRKQHHPKRSG. The tract at residues 1–25 is disordered; sequence MLIPRRVKHRKQHHPKRSGMSKGGT.

Belongs to the universal ribosomal protein uL16 family. As to quaternary structure, part of the 50S ribosomal subunit.

Its function is as follows. Binds 23S rRNA and is also seen to make contacts with the A and possibly P site tRNAs. This Streptomyces griseus subsp. griseus (strain JCM 4626 / CBS 651.72 / NBRC 13350 / KCC S-0626 / ISP 5235) protein is Large ribosomal subunit protein uL16.